Here is a 250-residue protein sequence, read N- to C-terminus: 4-hydroxy-tetrahydrodipicolinate reductase (250 aa).

NAD(+)-binding positions include 10 to 15 (GAKGRI), 78 to 80 (GTT), and 105 to 108 (APNF). Catalysis depends on His135, which acts as the Proton donor/acceptor. His136 lines the (S)-2,3,4,5-tetrahydrodipicolinate pocket. Lys139 functions as the Proton donor in the catalytic mechanism. Residue 145–146 (GT) coordinates (S)-2,3,4,5-tetrahydrodipicolinate.

The protein belongs to the DapB family.

The protein localises to the cytoplasm. It carries out the reaction (S)-2,3,4,5-tetrahydrodipicolinate + NAD(+) + H2O = (2S,4S)-4-hydroxy-2,3,4,5-tetrahydrodipicolinate + NADH + H(+). It catalyses the reaction (S)-2,3,4,5-tetrahydrodipicolinate + NADP(+) + H2O = (2S,4S)-4-hydroxy-2,3,4,5-tetrahydrodipicolinate + NADPH + H(+). The protein operates within amino-acid biosynthesis; L-lysine biosynthesis via DAP pathway; (S)-tetrahydrodipicolinate from L-aspartate: step 4/4. In terms of biological role, catalyzes the conversion of 4-hydroxy-tetrahydrodipicolinate (HTPA) to tetrahydrodipicolinate. In Streptomyces coelicolor (strain ATCC BAA-471 / A3(2) / M145), this protein is 4-hydroxy-tetrahydrodipicolinate reductase.